The sequence spans 30 residues: Ribonuclease pancreatic (30 aa).

A compositionally biased stretch (basic and acidic residues) spans 1–13; that stretch reads KETAAAKFERQHM. Positions 1–21 are disordered; the sequence is KETAAAKFERQHMDPAPAAAX. Substrate-binding residues include Lys-7 and Arg-10. The active-site Proton acceptor is the His-12.

Belongs to the pancreatic ribonuclease family. As to quaternary structure, monomer. Interacts with and forms tight 1:1 complexes with RNH1. Dimerization of two such complexes may occur. Interaction with RNH1 inhibits this protein. Pancreas.

The protein localises to the secreted. It catalyses the reaction an [RNA] containing cytidine + H2O = an [RNA]-3'-cytidine-3'-phosphate + a 5'-hydroxy-ribonucleotide-3'-[RNA].. The enzyme catalyses an [RNA] containing uridine + H2O = an [RNA]-3'-uridine-3'-phosphate + a 5'-hydroxy-ribonucleotide-3'-[RNA].. Functionally, endonuclease that catalyzes the cleavage of RNA on the 3' side of pyrimidine nucleotides. Acts on single-stranded and double-stranded RNA. The protein is Ribonuclease pancreatic (RNASE1) of Odocoileus virginianus virginianus (Virginia white-tailed deer).